Consider the following 148-residue polypeptide: MRTVLNILNFVLGGFATTLGWLLATLVSIVLIFTLPLTRSCWEITKLSLVPYGNEAIHVDELNPAGKNVLLNTGGTVLNIFWLIFFGWWLCLMHIATGIAQCISIIGIPVGIANFKIAAIALWPVGRRVVSVETAQAAREANARRRFE.

Residues 1–14 lie on the Periplasmic side of the membrane; the sequence is MRTVLNILNFVLGG. The helical transmembrane segment at 15 to 37 threads the bilayer; that stretch reads FATTLGWLLATLVSIVLIFTLPL. Residues 38-76 lie on the Cytoplasmic side of the membrane; sequence TRSCWEITKLSLVPYGNEAIHVDELNPAGKNVLLNTGGT. A helical transmembrane segment spans residues 77 to 99; sequence VLNIFWLIFFGWWLCLMHIATGI. Over 100–102 the chain is Periplasmic; that stretch reads AQC. The chain crosses the membrane as a helical span at residues 103–125; that stretch reads ISIIGIPVGIANFKIAAIALWPV. Over 126–148 the chain is Cytoplasmic; it reads GRRVVSVETAQAAREANARRRFE.

The protein resides in the cell inner membrane. In Escherichia coli (strain K12), this protein is Inner membrane protein YccF (yccF).